A 316-amino-acid chain; its full sequence is Ribosomal RNA large subunit methyltransferase F (316 aa).

It belongs to the methyltransferase superfamily. METTL16/RlmF family.

It is found in the cytoplasm. It carries out the reaction adenosine(1618) in 23S rRNA + S-adenosyl-L-methionine = N(6)-methyladenosine(1618) in 23S rRNA + S-adenosyl-L-homocysteine + H(+). Its function is as follows. Specifically methylates the adenine in position 1618 of 23S rRNA. The polypeptide is Ribosomal RNA large subunit methyltransferase F (Pseudomonas entomophila (strain L48)).